Here is a 66-residue protein sequence, read N- to C-terminus: Large ribosomal subunit protein bL35 (66 aa).

The tract at residues 22–41 (VMSAQRGKRHGMIKRTKKQI) is disordered. Basic residues predominate over residues 27-41 (RGKRHGMIKRTKKQI).

Belongs to the bacterial ribosomal protein bL35 family.

This is Large ribosomal subunit protein bL35 from Rhodopseudomonas palustris (strain TIE-1).